Here is a 399-residue protein sequence, read N- to C-terminus: Chorismate synthase (399 aa).

R40 and R46 together coordinate NADP(+). Residues R135–S137, Q256–A257, G301, K316–T320, and R342 contribute to the FMN site.

Belongs to the chorismate synthase family. In terms of assembly, homotetramer. FMNH2 serves as cofactor.

The catalysed reaction is 5-O-(1-carboxyvinyl)-3-phosphoshikimate = chorismate + phosphate. It functions in the pathway metabolic intermediate biosynthesis; chorismate biosynthesis; chorismate from D-erythrose 4-phosphate and phosphoenolpyruvate: step 7/7. Its function is as follows. Catalyzes the anti-1,4-elimination of the C-3 phosphate and the C-6 proR hydrogen from 5-enolpyruvylshikimate-3-phosphate (EPSP) to yield chorismate, which is the branch point compound that serves as the starting substrate for the three terminal pathways of aromatic amino acid biosynthesis. This reaction introduces a second double bond into the aromatic ring system. This chain is Chorismate synthase, found in Paenarthrobacter aurescens (strain TC1).